Here is a 118-residue protein sequence, read N- to C-terminus: MAGVMKLACMVLACMIVAGPITANALMSCGTVNGNLAGCIAYLTRGAPLTQGCCNGVTNLKNMASTTPDRQQACRCLQSAAKAVGPGLNTARAAGLPSACKVNIPYKISASTNCNTVR.

The signal sequence occupies residues Met-1–Ala-25. Disulfide bonds link Cys-29–Cys-76, Cys-39–Cys-53, Cys-54–Cys-100, and Cys-74–Cys-114.

This sequence belongs to the plant LTP family.

Its function is as follows. Plant non-specific lipid-transfer proteins transfer phospholipids as well as galactolipids across membranes. May play a role in wax or cutin deposition in the cell walls of expanding epidermal cells and certain secretory tissues. The chain is Non-specific lipid-transfer protein 2 (LTP2) from Arabidopsis thaliana (Mouse-ear cress).